We begin with the raw amino-acid sequence, 414 residues long: Secernin-1 (414 aa).

Residue Ala2 is modified to N-acetylalanine. The active site involves Cys9.

This sequence belongs to the peptidase C69 family. Secernin subfamily.

The protein resides in the cytoplasm. In terms of biological role, regulates exocytosis in mast cells. Increases both the extent of secretion and the sensitivity of mast cells to stimulation with calcium. In Homo sapiens (Human), this protein is Secernin-1 (SCRN1).